A 226-amino-acid chain; its full sequence is 7-cyano-7-deazaguanine synthase (226 aa).

9–19 (LSGGLDSATVL) lines the ATP pocket. Positions 189, 199, 202, and 205 each coordinate Zn(2+).

It belongs to the QueC family. The cofactor is Zn(2+).

It catalyses the reaction 7-carboxy-7-deazaguanine + NH4(+) + ATP = 7-cyano-7-deazaguanine + ADP + phosphate + H2O + H(+). It functions in the pathway purine metabolism; 7-cyano-7-deazaguanine biosynthesis. In terms of biological role, catalyzes the ATP-dependent conversion of 7-carboxy-7-deazaguanine (CDG) to 7-cyano-7-deazaguanine (preQ(0)). The sequence is that of 7-cyano-7-deazaguanine synthase from Cupriavidus pinatubonensis (strain JMP 134 / LMG 1197) (Cupriavidus necator (strain JMP 134)).